Consider the following 454-residue polypeptide: Tryptophanase (454 aa).

K256 carries the post-translational modification N6-(pyridoxal phosphate)lysine.

Belongs to the beta-eliminating lyase family. As to quaternary structure, homotetramer. It depends on pyridoxal 5'-phosphate as a cofactor.

The catalysed reaction is L-tryptophan + H2O = indole + pyruvate + NH4(+). It participates in amino-acid degradation; L-tryptophan degradation via pyruvate pathway; indole and pyruvate from L-tryptophan: step 1/1. This chain is Tryptophanase (tnaA), found in Rhodobacter capsulatus (Rhodopseudomonas capsulata).